A 336-amino-acid chain; its full sequence is MVYIMGFEGSANKLGIGIVKDDGTILSNIRHTFITPPGEGFLPKDTAKHHRSFILSLVEKSLEESKLKPSDIDCLAYTKGPGMGPPLRSVAVTVRMLSQLWDRPIVAVNHCIAHIEMGRLITGAVDPTILYVSGGNTQVISYSLKKYRIFGETIDIAVGNCLDRFARVIQIPNDPSPGYNIEQLAKKGKNLIELPYITKGMDVSFSGILSSIEGMVKNKQNKTQHSVEDLCYSLQEHLFSMLVETAERALAHCGQNEVLAVGGVGCNQRLQEMIQQMISQRNGKSFAIDERYCIDNGAMIAWAGYLIFKNGTTTPLSQTTTTQRFRTDQVDVTWRD.

The a divalent metal cation site is built by H110, H114, and Y131. Substrate contacts are provided by residues 131 to 135, D163, G178, E182, and N267; that span reads YVSGG. D295 is an a divalent metal cation binding site.

Belongs to the KAE1 / TsaD family. In terms of assembly, component of the EKC/KEOPS complex; the whole complex dimerizes. The cofactor is a divalent metal cation.

Its subcellular location is the cytoplasm. The protein resides in the nucleus. It catalyses the reaction L-threonylcarbamoyladenylate + adenosine(37) in tRNA = N(6)-L-threonylcarbamoyladenosine(37) in tRNA + AMP + H(+). In terms of biological role, component of the EKC/KEOPS complex that is required for the formation of a threonylcarbamoyl group on adenosine at position 37 (t(6)A37) in tRNAs that read codons beginning with adenine. The complex is probably involved in the transfer of the threonylcarbamoyl moiety of threonylcarbamoyl-AMP (TC-AMP) to the N6 group of A37. Osgep likely plays a direct catalytic role in this reaction, but requires other protein(s) of the complex to fulfill this activity. In Dictyostelium discoideum (Social amoeba), this protein is Probable tRNA N6-adenosine threonylcarbamoyltransferase.